Consider the following 215-residue polypeptide: MVLIMRVSPPEHGLLYTANNIKLKLGDKVVGEGTVYIAQNTLSWQPTELAEGISIEWKQVSLHGISSNPRKCIYFMLDHKVEWNGVYGDPPQQAVNGRNGGGSEAEVDEGNGSDEHDEDDNFEDAVDEQFGEVTECWLMPEDIHTVDTMYSAMTTCQALHPDSANSDSEDSDPMQDAGGLEDEAMEEDDALTLGRNGVQNLSLDDDEERFEDADE.

Disordered stretches follow at residues 88–120 and 160–215; these read GDPPQQAVNGRNGGGSEAEVDEGNGSDEHDEDD and HPDS…DADE. Acidic residues-rich tracts occupy residues 105-120, 167-190, and 203-215; these read AEVDEGNGSDEHDEDD, DSEDSDPMQDAGGLEDEAMEEDDA, and LDDDEERFEDADE.

It belongs to the pICln (TC 1.A.47) family. In terms of assembly, component of the methylosome, a 20S complex containing at least CLNS1A/pICln, PRMT5/SKB1 and WDR77/MEP50; may mediate SNRPD1 and SNRPD3 methylation. Forms a 6S pICln-Sm complex composed of CLNS1A/pICln, SNRPD1, SNRPD2, SNRPE, SNRPF and SNRPG; ring-like structure where CLNS1A/pICln mimics additional Sm proteins and which is unable to assemble into the core snRNP.

It localises to the cytoplasm. The protein localises to the cytosol. Its subcellular location is the nucleus. The protein resides in the cytoskeleton. Functionally, involved in both the assembly of spliceosomal snRNPs and the methylation of Sm proteins. Chaperone that regulates the assembly of spliceosomal U1, U2, U4 and U5 small nuclear ribonucleoproteins (snRNPs), the building blocks of the spliceosome, and thereby plays an important role in the splicing of cellular pre-mRNAs. Most spliceosomal snRNPs contain a common set of Sm proteins SNRPB, SNRPD1, SNRPD2, SNRPD3, SNRPE, SNRPF and SNRPG that assemble in a heptameric protein ring on the Sm site of the small nuclear RNA to form the core snRNP (Sm core). In the cytosol, the Sm proteins SNRPD1, SNRPD2, SNRPE, SNRPF and SNRPG are trapped in an inactive 6S pICln-Sm complex by the chaperone CLNS1A that controls the assembly of the core snRNP. Dissociation by the SMN complex of CLNS1A from the trapped Sm proteins and their transfer to an SMN-Sm complex triggers the assembly of core snRNPs and their transport to the nucleus. This is Methylosome subunit pICln (icln) from Drosophila melanogaster (Fruit fly).